Here is a 269-residue protein sequence, read N- to C-terminus: Protein tio (269 aa).

Positions 1 to 12 (MANEPQEHEEGK) are enriched in basic and acidic residues. The segment at 1–127 (MANEPQEHEE…NETKCPDEQN (127 aa)) is disordered. The Cytoplasmic segment spans residues 1–246 (MANEPQEHEE…VEKKLTCVIC (246 aa)). The segment covering 27–41 (PNIPQDPTPGTPPGP) has biased composition (pro residues). Residues 61-74 (SEGPPDGSGNSSPP) show a composition bias toward low complexity. Polar residues-rich tracts occupy residues 91-101 (SESGGNNSAPN) and 114-127 (AGNG…DEQN). Y136 bears the Phosphotyrosine; by host LCK mark. The tract at residues 158 to 167 (EEERSPFNKY) is CSKH/LBD2. Residues 186-195 (IPPPQLPPRP) are SH3B/LBD1. Residues 247–267 (LLIGILVLLILLFMLGFLFLL) form a helical membrane-spanning segment. Residues 268-269 (MK) are Extracellular-facing.

In terms of assembly, homodimer. Binds SH3 domain of host LYN, HCK, LCK, SRC, FYN or YES. When tyrosine-phosphorylated, binds to the SH2 domain of host LCK, SRC, or FYN. In terms of processing, phosphorylated by host LCK, SRC and less efficiently by FYN.

Its subcellular location is the host cell membrane. Functionally, transforms host T-cells, inducing T-cell lymphomia in the host. Activates at least SRC and LCK tyrosines kinases, thereby activating signaling pathway transforming host T-cells. Human T-cells transformed ex vivo display a IL2 indenpendent growth phenotype. The protein is Protein tio of Ateles (AtHV-3).